Reading from the N-terminus, the 928-residue chain is Nuclear pore complex-interacting protein family member B12 (928 aa).

Residues 73 to 93 (VVITLWIVYLWVSLLKTIFWS) traverse the membrane as a helical segment. 2 disordered regions span residues 242–452 (RMGH…NIKT) and 663–928 (ERLR…RRLS). Residues 252-263 (QQHSITDNSLSL) show a composition bias toward polar residues. The segment covering 349–359 (PLPPSAPPSAP) has biased composition (pro residues). Composition is skewed to basic and acidic residues over residues 406–416 (DNIKTPAERLR), 698–708 (DNIKTPAERLR), 740–750 (DNIKTPAERLR), and 782–792 (DNIKTPAERLR).

This sequence belongs to the NPIP family.

It is found in the membrane. This Homo sapiens (Human) protein is Nuclear pore complex-interacting protein family member B12.